We begin with the raw amino-acid sequence, 210 residues long: Uracil phosphoribosyltransferase (210 aa).

Residues arginine 78, arginine 103, and 130-138 (DPMLATGGS) contribute to the 5-phospho-alpha-D-ribose 1-diphosphate site. Residues isoleucine 193 and 198-200 (GDA) contribute to the uracil site. Residue aspartate 199 participates in 5-phospho-alpha-D-ribose 1-diphosphate binding.

It belongs to the UPRTase family. Requires Mg(2+) as cofactor.

It catalyses the reaction UMP + diphosphate = 5-phospho-alpha-D-ribose 1-diphosphate + uracil. It functions in the pathway pyrimidine metabolism; UMP biosynthesis via salvage pathway; UMP from uracil: step 1/1. With respect to regulation, allosterically activated by GTP. Functionally, catalyzes the conversion of uracil and 5-phospho-alpha-D-ribose 1-diphosphate (PRPP) to UMP and diphosphate. The polypeptide is Uracil phosphoribosyltransferase (Chromobacterium violaceum (strain ATCC 12472 / DSM 30191 / JCM 1249 / CCUG 213 / NBRC 12614 / NCIMB 9131 / NCTC 9757 / MK)).